A 172-amino-acid polypeptide reads, in one-letter code: MFDVFTRVVSQADARGEYLSGSQLDALSATVAEGNKRIDSVNRITGNASAIVSNAARALFAEQPQLIQPGGNAYTSRRMAACLRDMEIILRYVTYATFTGDASVLEDRCLNGLRETYVALGVPGASVAAGVQKMKEAALDIVNDPNGITRGDCSAIVAEIAGYFDRAAAAVA.

At N72 the chain carries N4-methylasparagine. 2 residues coordinate (2R,3E)-phycocyanobilin: C82 and C153.

It belongs to the phycobiliprotein family. As to quaternary structure, heterodimer of an alpha and a beta chain, which further assembles into trimers. The trimers assemble into hexamers, although these were not seen in the crystallographic studies. Part of 2 PBS rod complexes, the conventional CpcG-PBS rod and a photosystem I-specific CpcL-PBS rod, both of which include ferredoxin--NADP reductase (petH). Interacts with rod linker CpcC2 via the latter's N-terminal PBS-linker domain. Post-translationally, contains two covalently linked bilin chromophores.

Its subcellular location is the cellular thylakoid membrane. In terms of biological role, light-harvesting photosynthetic bile pigment-protein from the phycobiliprotein complex (phycobilisome, PBS). Phycocyanin is the major phycobiliprotein in the PBS rod. The chain is C-phycocyanin beta subunit (cpcB) from Synechocystis sp. (strain ATCC 27184 / PCC 6803 / Kazusa).